Reading from the N-terminus, the 240-residue chain is 7-cyano-7-deazaguanine synthase (240 aa).

18–28 (FSGGQDSTTCL) contacts ATP. 4 residues coordinate Zn(2+): Cys197, Cys206, Cys209, and Cys212.

This sequence belongs to the QueC family. It depends on Zn(2+) as a cofactor.

The enzyme catalyses 7-carboxy-7-deazaguanine + NH4(+) + ATP = 7-cyano-7-deazaguanine + ADP + phosphate + H2O + H(+). It functions in the pathway purine metabolism; 7-cyano-7-deazaguanine biosynthesis. Functionally, catalyzes the ATP-dependent conversion of 7-carboxy-7-deazaguanine (CDG) to 7-cyano-7-deazaguanine (preQ(0)). In Shewanella putrefaciens (strain CN-32 / ATCC BAA-453), this protein is 7-cyano-7-deazaguanine synthase.